Consider the following 252-residue polypeptide: Chitooligosaccharide deacetylase (252 aa).

Positions 61 and 125 each coordinate Mg(2+).

It belongs to the YdjC deacetylase family. ChbG subfamily. As to quaternary structure, homodimer. Mg(2+) is required as a cofactor.

It is found in the cytoplasm. It catalyses the reaction N,N'-diacetylchitobiose + H2O = N-acetyl-beta-D-glucosaminyl-(1-&gt;4)-D-glucosamine + acetate. It carries out the reaction diacetylchitobiose-6'-phosphate + H2O = N'-monoacetylchitobiose-6'-phosphate + acetate. The protein operates within glycan degradation; chitin degradation. Its function is as follows. Involved in the degradation of chitin. ChbG is essential for growth on the acetylated chitooligosaccharides chitobiose and chitotriose but is dispensable for growth on cellobiose and chitosan dimer, the deacetylated form of chitobiose. Deacetylation of chitobiose-6-P and chitotriose-6-P is necessary for both the activation of the chb promoter by the regulatory protein ChbR and the hydrolysis of phosphorylated beta-glucosides by the phospho-beta-glucosidase ChbF. Catalyzes the removal of only one acetyl group from chitobiose-6-P to yield monoacetylchitobiose-6-P, the inducer of ChbR and the substrate of ChbF. The protein is Chitooligosaccharide deacetylase of Klebsiella pneumoniae subsp. pneumoniae (strain ATCC 700721 / MGH 78578).